The sequence spans 112 residues: Large ribosomal subunit protein bL17 (112 aa).

The protein belongs to the bacterial ribosomal protein bL17 family. Part of the 50S ribosomal subunit. Contacts protein L32.

The sequence is that of Large ribosomal subunit protein bL17 from Thermoanaerobacter pseudethanolicus (strain ATCC 33223 / 39E) (Clostridium thermohydrosulfuricum).